Consider the following 527-residue polypeptide: Protein PyrBI (527 aa).

The aspartate carbamoyltransferase stretch occupies residues 1-342 (MKRDFLGRTL…MFGGALEAPF (342 aa)). The interval 343 to 357 (DTSKKEEKPEEDFII) is linker. Positions 368 to 527 (VQKEGKRGIK…PHSFEEIWSI (160 aa)) are aspartate carbamoyltransferase regulatory region. 4 residues coordinate Zn(2+): cysteine 483, cysteine 488, cysteine 512, and cysteine 515.

This sequence in the N-terminal section; belongs to the aspartate/ornithine carbamoyltransferase superfamily. ATCase family. In the C-terminal section; belongs to the PyrI family.

It carries out the reaction carbamoyl phosphate + L-aspartate = N-carbamoyl-L-aspartate + phosphate + H(+). It participates in pyrimidine metabolism; UMP biosynthesis via de novo pathway; (S)-dihydroorotate from bicarbonate: step 2/3. This chain is Protein PyrBI (pyrBI), found in Thermotoga maritima (strain ATCC 43589 / DSM 3109 / JCM 10099 / NBRC 100826 / MSB8).